Here is a 467-residue protein sequence, read N- to C-terminus: Gamma-aminobutyric acid receptor subunit gamma-2 (467 aa).

An N-terminal signal peptide occupies residues 1–39 (MSSPNIWSTGSSVYSTPVFSQKMTVWILLLLSLYPGFTS). Residues 40 to 275 (QKSDDDYEDY…FDLSRRMGYF (236 aa)) are Extracellular-facing. 2 N-linked (GlcNAc...) asparagine glycosylation sites follow: Asn52 and Asn129. A disulfide bridge links Cys190 with Cys204. N-linked (GlcNAc...) asparagine glycosylation is present at Asn247. A helical membrane pass occupies residues 276–296 (TIQTYIPCTLIVVLSWVSFWI). Residues 297–302 (NKDAVP) are Cytoplasmic-facing. Residues 303–322 (ARTSLGITTVLTMTTLSTIA) traverse the membrane as a helical segment. Residues 323–334 (RKSLPKVSYVTA) are Extracellular-facing. Residues 335–359 (MDLFVSVCFIFVFSALVEYGTLHYF) form a helical membrane-spanning segment. The Cytoplasmic portion of the chain corresponds to 360-443 (VSNRKPSKDK…IHIRIAKMDS (84 aa)). Positions 425 to 442 (RTGAWRHGRIHIRIAKMD) are interaction with GABARAP. The helical transmembrane segment at 444-464 (YARIFFPTAFCLFNLVYWVSY) threads the bilayer. Topologically, residues 465-467 (LYL) are extracellular.

This sequence belongs to the ligand-gated ion channel (TC 1.A.9) family. Gamma-aminobutyric acid receptor (TC 1.A.9.5) subfamily. GABRG2 sub-subfamily. In terms of assembly, heteropentamer, formed by a combination of alpha (GABRA1-6), beta (GABRB1-3), gamma (GABRG1-3), delta (GABRD), epsilon (GABRE), rho (GABRR1-3), pi (GABRP) and theta (GABRQ) chains, each subunit exhibiting distinct physiological and pharmacological properties. Interacts with GABARAP. Interacts with KIF21B. Identified in a complex of 720 kDa composed of LHFPL4, NLGN2, GABRA1, GABRB2, GABRG2 and GABRB3. Interacts with LHFPL4. Interacts with SHISA7; interaction leads to the regulation of GABA(A) receptor trafficking, channel deactivation kinetics and pharmacology. In terms of processing, palmitoylated by ZDHHC3/GODZ; required for the accumulation of GABA(A) receptors at the postsynaptic membrane of inhibitory GABAergic synapses. Glycosylated.

The protein resides in the postsynaptic cell membrane. The protein localises to the cell membrane. It is found in the cell projection. Its subcellular location is the dendrite. It localises to the cytoplasmic vesicle membrane. It carries out the reaction chloride(in) = chloride(out). With respect to regulation, allosterically activated by benzodiazepines. Activated by pentobarbital. Inhibited by the antagonist bicuculline. Inhibited by zinc ions. Potentiated by histamine. Gamma subunit of the heteropentameric ligand-gated chloride channel gated by gamma-aminobutyric acid (GABA), a major inhibitory neurotransmitter in the brain. GABA-gated chloride channels, also named GABA(A) receptors (GABAAR), consist of five subunits arranged around a central pore and contain GABA active binding site(s) located at the alpha and beta subunit interface(s). When activated by GABA, GABAARs selectively allow the flow of chloride anions across the cell membrane down their electrochemical gradient. Gamma-2/GABRG2-containing GABAARs are found at both synaptic and extrasynaptic sites. Chloride influx into the postsynaptic neuron following GABAAR opening decreases the neuron ability to generate a new action potential, thereby reducing nerve transmission. GABAARs containing alpha-1 and beta-2 or -3 subunits exhibit synaptogenic activity; the gamma-2 subunit being necessary but not sufficient to induce rapid synaptic contacts formation. Extrasynaptic gamma-2-containing receptors contribute to the tonic GABAergic inhibition. GABAARs function also as histamine receptor where histamine binds at the interface of two neighboring beta subunits and potentiates GABA response in a gamma-2 subunit-controlled manner. The protein is Gamma-aminobutyric acid receptor subunit gamma-2 (GABRG2) of Pongo abelii (Sumatran orangutan).